A 181-amino-acid polypeptide reads, in one-letter code: Mitochondrial inner membrane protein Mpv17 (181 aa).

Transmembrane regions (helical) follow at residues 20 to 37 (MCIA…AQYL), 51 to 67 (FSFL…FIWF), 86 to 103 (LCID…AILF), and 152 to 169 (VILN…LSYI).

The protein belongs to the peroxisomal membrane protein PXMP2/4 family.

It is found in the mitochondrion inner membrane. Involved in mitochondria homeostasis. The polypeptide is Mitochondrial inner membrane protein Mpv17 (Caenorhabditis elegans).